The primary structure comprises 337 residues: BRI1 kinase inhibitor 1 (337 aa).

The segment covering Met-1 to Ala-25 has biased composition (polar residues). 2 disordered regions span residues Met-1–Ser-38 and Ser-51–Gln-72. A compositionally biased stretch (low complexity) spans Ser-26–Ser-38. Tyr-211 carries the post-translational modification Phosphotyrosine. Residues Ser-270 to Glu-310 are disordered. Residues Ser-288–Glu-310 show a composition bias toward low complexity.

In terms of assembly, interacts (via C-terminus) with BRI1 (via kinase domain). In terms of processing, phosphorylated on Tyr-211 in response to brassinosteroid perception, leading to its inactivation: once phosphorylated, displaced into the cytosol where it is inactive. In terms of tissue distribution, expressed in leaves, petioles, shoot apices, hypocotyls, roots and flowers.

It is found in the cell membrane. Its subcellular location is the cytoplasm. Functionally, negative regulator of brassinosteroid signaling. When associated to the membrane, limits the interaction of BRI1 with BAK1 by binding to the kinase-inactive form of BRI1. This chain is BRI1 kinase inhibitor 1 (BKI1), found in Arabidopsis thaliana (Mouse-ear cress).